The primary structure comprises 111 residues: Estrogen receptor (111 aa).

Positions 1-42 (PSGYAVREAGPPAYYRPNSDNRRQGGRERLASTSDKGSMAVE) are disordered. The modulating stretch occupies residues 1–49 (PSGYAVREAGPPAYYRPNSDNRRQGGRERLASTSDKGSMAVESAKETRY). Positions 19-30 (SDNRRQGGRERL) are enriched in basic and acidic residues. At serine 32 the chain carries Phosphoserine. 2 NR C4-type zinc fingers span residues 50–70 (CAVC…CEGC) and 86–110 (CPAT…LRKC). Residues 50 to 111 (CAVCNDYASG…CQACRLRKCY (62 aa)) constitute a DNA-binding region (nuclear receptor).

The protein belongs to the nuclear hormone receptor family. NR3 subfamily. In terms of assembly, binds DNA as a homodimer. Can form a heterodimer with ESR2. Interacts with coactivator NCOA5. Interacts with PELP1, the interaction is enhanced by 17-beta-estradiol; the interaction increases ESR1 transcriptional activity. Interacts with NCOA7; the interaction is ligand-inducible. Interacts with AKAP13, CUEDC2, HEXIM1, KDM5A, MAP1S, SMARD1, and UBE1C. Interacts with MUC1; the interaction is stimulated by 7 beta-estradiol (E2) and enhances ESR1-mediated transcription. Interacts with DNTTIP2, and UIMC1. Interacts with KMT2D/MLL2. Interacts with ATAD2; the interaction is enhanced by estradiol. Interacts with KIF18A and LDB1. Interacts with RLIM (via its C-terminus). Interacts with MACROD1. Interacts with SH2D4A and PLCG. Interacts with SH2D4A; the interaction blocks binding to PLCG and inhibits estrogen-induced cell proliferation. Interacts with DYNLL1. Interacts with CCDC62; the interaction requires estradiol and appears to enhance the transcription of target genes. Interacts with NR2C1; the interaction prevents homodimerization of ESR1 and suppresses its transcriptional activity and cell growth. Interacts with DNAAF4. Interacts with PRMT2. Interacts with RBFOX2. Interacts with EP300; the interaction is estrogen-dependent and enhanced by CITED1. Interacts with CITED1; the interaction is estrogen-dependent. Interacts with FAM120B, FOXL2, PHB2 and SLC30A9. Interacts with coactivators NCOA3 and NCOA6. Interacts with STK3/MST2 only in the presence of SAV1 and vice-versa. Binds to CSNK1D. Interacts with NCOA2; NCOA2 can interact with ESR1 AF-1 and AF-2 domains simultaneously and mediate their transcriptional synergy. Interacts with DDX5. Interacts with NCOA1; the interaction seems to require a self-association of N-terminal and C-terminal regions. Interacts with ZNF366, DDX17, NFKB1, RELA, SP1 and SP3. Interacts with NRIP1. Interacts with GPER1; the interaction occurs in an estrogen-dependent manner. Interacts with CLOCK and the interaction is stimulated by estrogen. Interacts with TRIP4 (ufmylated); estrogen dependent. Interacts with LMTK3; the interaction phosphorylates ESR1 (in vitro) and protects it against proteasomal degradation. Interacts with CCAR2 (via N-terminus) in a ligand-independent manner. Interacts with ZFHX3. Interacts with SFR1 in a ligand-dependent and -independent manner. Interacts with DCAF13, LATS1 and DCAF1; regulates ESR1 ubiquitination and ubiquitin-mediated proteasomal degradation. Interacts (via DNA-binding domain) with POU4F2 (C-terminus); this interaction increases the estrogen receptor ESR1 transcriptional activity in a DNA- and ligand 17-beta-estradiol-independent manner. Interacts with ESRRB isoform 1. Interacts with UBE3A and WBP2. Interacts with GTF2B. Interacts with RBM39. In the absence of hormonal ligand, interacts with TACC1. Interacts with PI3KR1 or PI3KR2 and PTK2/FAK1. Interacts with SRC. Interacts with BAG1; the interaction is promoted in the absence of estradiol (17-beta-estradiol/E2). Interacts with and ubiquitinated by STUB1; the interaction is promoted in the absence of estradiol (17-beta-estradiol/E2). Interacts with NEDD8. Post-translationally, ubiquitinated; regulated by LATS1 via DCAF1 it leads to ESR1 proteasomal degradation. Deubiquitinated by OTUB1. Ubiquitinated by STUB1/CHIP; in the CA1 hippocampal region following loss of endogenous circulating estradiol (17-beta-estradiol/E2). Ubiquitinated by UBR5, leading to its degradation: UBR5 specifically recognizes and binds ligand-bound ESR1 when it is not associated with coactivators (NCOAs). In presence of NCOAs, the UBR5-degron is not accessible, preventing its ubiquitination and degradation. In terms of processing, dimethylated by PRMT1. Demethylated by JMJD6. Palmitoylated by ZDHHC7 and ZDHHC21. This modification is required for plasma membrane targeting and for rapid intracellular signaling via ERK and AKT kinases and cAMP generation, but not for signaling mediated by the nuclear hormone receptor. Post-translationally, phosphorylated by cyclin A/CDK2 and CK1. Phosphorylation probably enhances transcriptional activity. Dephosphorylation by PPP5C inhibits its transactivation activity. Phosphorylated by LMTK3 (in vitro).

It is found in the nucleus. The protein localises to the cytoplasm. The protein resides in the golgi apparatus. Its subcellular location is the cell membrane. Nuclear hormone receptor. The steroid hormones and their receptors are involved in the regulation of eukaryotic gene expression and affect cellular proliferation and differentiation in target tissues. Ligand-dependent nuclear transactivation involves either direct homodimer binding to a palindromic estrogen response element (ERE) sequence or association with other DNA-binding transcription factors, such as AP-1/c-Jun, c-Fos, ATF-2, Sp1 and Sp3, to mediate ERE-independent signaling. Ligand binding induces a conformational change allowing subsequent or combinatorial association with multiprotein coactivator complexes through LXXLL motifs of their respective components. Mutual transrepression occurs between the estrogen receptor (ER) and NF-kappa-B in a cell-type specific manner. Decreases NF-kappa-B DNA-binding activity and inhibits NF-kappa-B-mediated transcription from the IL6 promoter and displace RELA/p65 and associated coregulators from the promoter. Recruited to the NF-kappa-B response element of the CCL2 and IL8 promoters and can displace CREBBP. Present with NF-kappa-B components RELA/p65 and NFKB1/p50 on ERE sequences. Can also act synergistically with NF-kappa-B to activate transcription involving respective recruitment adjacent response elements; the function involves CREBBP. Can activate the transcriptional activity of TFF1. Also mediates membrane-initiated estrogen signaling involving various kinase cascades. Essential for MTA1-mediated transcriptional regulation of BRCA1 and BCAS3. Maintains neuronal survival in response to ischemic reperfusion injury when in the presence of circulating estradiol (17-beta-estradiol/E2). This chain is Estrogen receptor (ESR1), found in Ovis aries (Sheep).